Reading from the N-terminus, the 341-residue chain is 2-acylglycerol O-acyltransferase 3 (341 aa).

Transmembrane regions (helical) follow at residues 29-49 (YVLT…VLLF) and 50-70 (TSLW…WDTP). N126 is a glycosylation site (N-linked (GlcNAc...) asparagine). A helical membrane pass occupies residues 137 to 157 (LFPGLRPWLAVLAGLFYLPVY).

This sequence belongs to the diacylglycerol acyltransferase family. Ubiquitinated. Ubiquitination leads to proteasomal degradation. As to expression, selectively expressed in the digestive system. Highly expressed in the ileum, and at lower level in jejunum, duodenum, colon, cecum and the rectum. Not expressed in the stomach and the esophagus and trachea. Expressed at very low level in liver.

Its subcellular location is the endoplasmic reticulum membrane. The protein localises to the cytoplasm. It is found in the perinuclear region. It carries out the reaction a 2-acylglycerol + an acyl-CoA = a 1,2-diacylglycerol + CoA. It catalyses the reaction an acyl-CoA + a 1,2-diacyl-sn-glycerol = a triacyl-sn-glycerol + CoA. The catalysed reaction is 2-(9Z-octadecenoyl)-glycerol + (9Z)-octadecenoyl-CoA = 1,2-di-(9Z-octadecenoyl)-sn-glycerol + CoA. The enzyme catalyses 2-(9Z-octadecenoyl)-glycerol + hexadecanoyl-CoA = 1-hexadecanoyl-2-(9Z-octadecenoyl)-sn-glycerol + CoA. It carries out the reaction 1,2-di-(9Z-octadecenoyl)-sn-glycerol + (9Z)-octadecenoyl-CoA = 1,2,3-tri-(9Z-octadecenoyl)-glycerol + CoA. It catalyses the reaction 1-hexadecanoyl-2-(9Z-octadecenoyl)-sn-glycerol + hexadecanoyl-CoA = 1,3-dihexadecanoyl-2-(9Z-octadecenoyl)glycerol + CoA. The catalysed reaction is all-trans-retinol + hexadecanoyl-CoA = all-trans-retinyl hexadecanoate + CoA. The enzyme catalyses 1-O-(9Z-octadecenyl)-glycerol + (9Z)-octadecenoyl-CoA = 1-O-(9Z-octadecyl)-3-(9Z-octadecenoyl)-glycerol + CoA. It carries out the reaction 1-O-(9Z-octadecyl)-3-(9Z-octadecenoyl)-glycerol + (9Z)-octadecenoyl-CoA = 1-O-(9Z-octadecenyl)-2,3-di-(9Z-octadecenoyl)glycerol + CoA. The protein operates within glycerolipid metabolism; triacylglycerol biosynthesis. Functionally, catalyzes the formation of diacylglycerol from 2-monoacylglycerol and fatty acyl-CoA. Also able to catalyze the terminal step in triacylglycerol synthesis by using diacylglycerol and fatty acyl-CoA as substrates. Has a preference toward palmitoyl-CoA and oleoyl-CoA. May be involved in absorption of dietary fat in the small intestine by catalyzing the resynthesis of triacylglycerol in enterocytes. Also able to use 1-monoalkylglycerol (1-MAkG) as an acyl acceptor for the synthesis of monoalkyl-monoacylglycerol (MAMAG). The chain is 2-acylglycerol O-acyltransferase 3 from Homo sapiens (Human).